The primary structure comprises 1583 residues: MGVKIKLVLAVVLILSANVLGQDEIVNDTESTVSVTEAQVVELETDVKEKEDETFEETSPVELLPDTENLEVRSGKYQLNDGLVGEEPVNLEAVDFNSNNVESEKQLLSPPSTTVVTGTDYSYIDGRVLPATTYQNNGQPYVITTQRLQQIRSNFMYWFYDQGGSDNIGDYQRDIHTSTPQIHKNFNFQLPFFGFRFNYTRISMNGYIYFSDPPDHYTYPLSFPVRDWPNINDPSFIGIFFSKCRIGNMRPEEPDPRRPGIYFRLDRDLQTRTDQLGVEMRERVTWDIREGVIGSETFFPKHTITITWKNMSFAGGIDNSLFMTNTFQMVLATDEVFTYAIFNYLEINWSSHTEAGGDTTTGEGGIPAYIGFNAGNGTRSYEYKPYSQASVLRDLTGRGWANGFPGRHIFRIDENILMGTCNKDIDGANLPLMFAPESGNMLGGTIVNITGPCFNPNDRITCRFDTESVLGAVVDVNRAICVQPRFWHNGYARFEVAINNEPYKWKGRYFVETPATATEKIFFPDNSVHERYPPEVRITWDRFNLTTNLNVQLQISLWGYKEVTIRPQLEYIDMIEVGVANTGEYVINPQNFRNRENIMHNDMQFGFLQINLTTPEVFKGVPISPILWSRPIPLGWYFAPQWERLHGQRWSNSMCNNWLRTDRFLKNFAAQVWVCPCTLEHALLDKGRFMPDLDCDRDTNPTCRYHWGGIHCVRSGAPSSEGSGQQCCYDKNGFLMLSYDQMWGSKPSRSHDFGFTPYNEANKVPSLSRWFHDMIPFYQCCLWQEEQAVGCETFRFERRPSQDCVAYQSPGVAGIFGDPHIVTFDDLQYTFNGKGEYVLVRVDHSQLKLDVQGRFEQVPRNIHGAVNATHLTSVVAASNNSQTIEVRLRPQHAQWRYRLDVFANGKRVYFDRTALRVQYFPGVTVYQPMYVLNQSEIVVMFSSGAGLEVVENRGFMTARVYLPWTFMNQTRGLFGNWSLDVNDDFTRPDGTLASVDLNNFQSAHRDFAQHWQLTDREQRDIGVAMFVREYGRTAAYYNDNEFIPNFIREPANFLPVNRSHDVTRAIEICQDSYQCRYDYGMTLNRDMAEFTKNYLSSITNIKEQNARRVISCGILETPRFGRKSNFFFTPGTRVNFECNQDFILTGDKRRVCEDNGRWNLPDYGYTECLRQQEFSQRALFLTWGVIVAVILPLGLLICLLWFWCWHKPRSEGKEGFRFEDLPRSKSASRLNLRSSSMGNITDTMKSSTIPGSEKKSPETPTEETPARIVGRSVLAPPADGDSSGIGYPDSGKSDSGKSDKSSGLPKKRRAYDKTYRTNEPLPNAPDVEFPEKLWDLSEEDLLSLTSPSDSESNRDSTLTRPAKDIQYLNKPRQTGRQAIPSDSGYSTKEGSEDPYAPKFDDQYSPIPSQYSPTYSEIYSPPISPASDSSPRNTYNNPGIPEAPKSAPVDGIKTFTMPTNKGKQEYSSRTLGATWGIISAVMLPIIIILICVAWRILQRRKAEEREENEFLDVKTRAIDPDDSVKVTSDDESIPYKKDVTEETPEPTEGVQAVEPSNPNYNYGRPYVDLQPGQPRQWGGETEIN.

The first 21 residues, 1–21 (MGVKIKLVLAVVLILSANVLG), serve as a signal peptide directing secretion. The Extracellular portion of the chain corresponds to 22–1182 (QDEIVNDTES…EFSQRALFLT (1161 aa)). The NIDO domain occupies 260 to 415 (GIYFRLDRDL…GRHIFRIDEN (156 aa)). Positions 647 to 798 (GQRWSNSMCN…VGCETFRFER (152 aa)) constitute an AMOP domain. The VWFD domain maps to 811–1019 (GVAGIFGDPH…HWQLTDREQR (209 aa)). In terms of domain architecture, Sushi spans 1110-1170 (ISCGILETPR…PDYGYTECLR (61 aa)). Cystine bridges form between C1112–C1152 and C1138–C1168. A helical membrane pass occupies residues 1183–1203 (WGVIVAVILPLGLLICLLWFW). Residues 1204–1472 (CWHKPRSEGK…QEYSSRTLGA (269 aa)) are Cytoplasmic-facing. The span at 1232–1250 (LRSSSMGNITDTMKSSTIP) shows a compositional bias: polar residues. A disordered region spans residues 1232 to 1448 (LRSSSMGNIT…IPEAPKSAPV (217 aa)). Basic and acidic residues predominate over residues 1291–1300 (GKSDSGKSDK). A compositionally biased stretch (polar residues) spans 1405–1416 (PIPSQYSPTYSE). Residues 1473 to 1493 (TWGIISAVMLPIIIILICVAW) traverse the membrane as a helical segment. Residues 1494–1583 (RILQRRKAEE…RQWGGETEIN (90 aa)) lie on the Extracellular side of the membrane. The span at 1521 to 1539 (DSVKVTSDDESIPYKKDVT) shows a compositional bias: basic and acidic residues. The segment at 1521–1583 (DSVKVTSDDE…RQWGGETEIN (63 aa)) is disordered.

In terms of tissue distribution, in fifth instar larvae, expressed in midgut epithelial cells (at protein level).

Its subcellular location is the membrane. The protein localises to the cell junction. It is found in the septate junction. The protein resides in the lateral cell membrane. In terms of biological role, may be required for the proper organization of smooth septate junctions and for the barrier function of the midgut epithelium. The sequence is that of Protein mesh from Bombyx mori (Silk moth).